We begin with the raw amino-acid sequence, 342 residues long: Polyprenyl transferase trt2 (342 aa).

9 helical membrane passes run 71-91 (VVGV…TVLL), 95-115 (IILS…NDLI), 141-161 (AALL…LLPS), 163-183 (CTVE…GKRF), 187-207 (PQLI…SLEV), 216-236 (TLSM…VYAC), 261-278 (LAYG…LGGV), 282-304 (LGLP…FLSV), and 319-339 (AKSS…LEYL).

This sequence belongs to the UbiA prenyltransferase family. Mg(2+) is required as a cofactor.

It localises to the membrane. The catalysed reaction is 3,5-dimethylorsellinate + (2E,6E)-farnesyl diphosphate = (3R)-3-farnesyl-6-hydroxy-2,3,5-trimethyl-4-oxocyclohexa-1,5-diene-1-carboxylate + diphosphate + H(+). The protein operates within secondary metabolite biosynthesis; terpenoid biosynthesis. Functionally, polyprenyl transferase; part of the gene cluster that mediates the biosynthesis of terretonin, a fungal meroterpenoid that acts as a mycotoxin. The first step of the pathway is the synthesis of 3,5-dimethylorsellinic acid (DMOA) by the polyketide synthase trt4. DMOA is then prenylated into farnesyl-DMOA by the polyprenyl transferase trt2. Methylation by the methyltransferase trt5 then leads to farnesyl-DMOA methyl ester which is further subject to epoxidation by the FAD-dependent monooxygenase trt8 to yield epoxyfarnesyl-DMOA methyl ester. Cyclization of epoxyfarnesyl-DMOA methyl ester by the terpene cyclase trt1 leads to a tetracycle intermediate which is in turn converted to preterretonin. Dehydrogenase trt9 comes next to transform preterretonin to preterrenoid. The FAD-dependent monooxygenase trt3 is then required for the C-hydroxylation at C16 of preterrenoid to yield terrenoid. The cytochrome P450 trt6 catalyzes three successive oxidations to transform terrenoid into an unstable intermediate, which then undergoes the D-ring expansion and unusual rearrangement of the methoxy group to afford the core skeleton of terretonin. Trt14 catalyzes the D-ring expansion of terretonin involving intramolecular methoxy rearrangement as well as the hydrolysis of the expanded D-ring and the methyl ester moiety. Finally, the nonheme iron-dependent dioxygenase trt7 accomplishes the last two oxidation reactions steps to complete the biosynthesis of terretonin. Terretonin C is produced via spontaneous decarboxylation of the terretonin precursor. Another shunt product of the terretonin biosynthesis is dihydrofarnesyl-DMOA, derived from epoxyfarnesyl-DMOA through hydrolysis of the epoxide. The sequence is that of Polyprenyl transferase trt2 from Aspergillus terreus (strain NIH 2624 / FGSC A1156).